The chain runs to 160 residues: Ribosomal RNA large subunit methyltransferase H (160 aa).

S-adenosyl-L-methionine is bound by residues leucine 76 and glycine 108.

This sequence belongs to the RNA methyltransferase RlmH family. Homodimer.

The protein resides in the cytoplasm. It catalyses the reaction pseudouridine(1915) in 23S rRNA + S-adenosyl-L-methionine = N(3)-methylpseudouridine(1915) in 23S rRNA + S-adenosyl-L-homocysteine + H(+). Its function is as follows. Specifically methylates the pseudouridine at position 1915 (m3Psi1915) in 23S rRNA. This is Ribosomal RNA large subunit methyltransferase H from Rhodopseudomonas palustris (strain BisB5).